Consider the following 391-residue polypeptide: Aspartic protease 17 (391 aa).

The signal sequence occupies residues 1 to 15 (MHLIFLLFLAPFCSA). One can recognise a Peptidase A1 domain in the interval 65 to 385 (YLGNFTVGTP…DIGNARIGFA (321 aa)). An N-linked (GlcNAc...) asparagine glycan is attached at N68. D83 is a catalytic residue. The N-linked (GlcNAc...) asparagine glycan is linked to N108. The active site involves D274. C309 and C345 are joined by a disulfide.

Belongs to the peptidase A1 family. Expressed in intestinal cells.

It localises to the secreted. In terms of biological role, aspartic proteinase. This chain is Aspartic protease 17, found in Caenorhabditis elegans.